The following is an 88-amino-acid chain: Serine protease inhibitor Kazal-type 11 (88 aa).

An N-terminal signal peptide occupies residues 1-24 (MSSTWIKFLFILTLVLLPYFVAES). One can recognise a Kazal-like domain in the interval 32–87 (LRKVPNCTLYKSESDCSRTLIPVCADNQMTYYNACYFCLEQLVSPIKYKYHGICTK). The N-linked (GlcNAc...) asparagine glycan is linked to Asn-37. Disulfide bonds link Cys-38-Cys-69, Cys-47-Cys-66, and Cys-55-Cys-85.

In terms of tissue distribution, expressed in epydiymis, in the caput. Also expressed in seminal vesicles.

It localises to the secreted. Probable serine protease inhibitor. This is Serine protease inhibitor Kazal-type 11 (Spink11) from Mus musculus (Mouse).